The primary structure comprises 205 residues: Putative 3-methyladenine DNA glycosylase (205 aa).

Belongs to the DNA glycosylase MPG family.

This is Putative 3-methyladenine DNA glycosylase from Bacillus cereus (strain G9842).